Reading from the N-terminus, the 472-residue chain is Na(+)/H(+) antiporter NhaA (472 aa).

Transmembrane regions (helical) follow at residues 48–68, 91–111, 129–149, 157–177, 185–205, 210–230, 237–257, 337–357, 374–394, 410–430, and 443–463; these read AGGI…NSAW, MSLH…VVGL, ALPV…YFAV, AGWG…LVLL, LIIF…LVIA, HEIS…LLLL, HAIP…HSGV, GPWV…GIDF, VCLG…WIAV, LLGV…ISQL, and LGIL…LYFG.

Belongs to the NhaA Na(+)/H(+) (TC 2.A.33) antiporter family.

It localises to the cell inner membrane. The enzyme catalyses Na(+)(in) + 2 H(+)(out) = Na(+)(out) + 2 H(+)(in). Na(+)/H(+) antiporter that extrudes sodium in exchange for external protons. In Syntrophobacter fumaroxidans (strain DSM 10017 / MPOB), this protein is Na(+)/H(+) antiporter NhaA.